Here is a 452-residue protein sequence, read N- to C-terminus: Probable M18 family aminopeptidase 1 (452 aa).

The Zn(2+) site is built by His93, His168, and His427.

This sequence belongs to the peptidase M18 family. Zn(2+) serves as cofactor.

This chain is Probable M18 family aminopeptidase 1 (apeA), found in Thermotoga neapolitana.